Here is a 59-residue protein sequence, read N- to C-terminus: Bdellastasin (59 aa).

Intrachain disulfides connect Cys-10-Cys-21, Cys-15-Cys-26, Cys-28-Cys-48, Cys-33-Cys-52, and Cys-37-Cys-54. The Antistasin-like domain occupies 28–54 (CSDLHCKVKCEHGFKKDDNGCEYACIC).

It is found in the secreted. Strong inhibitor of mammalian trypsin, plasmin and acrosin. The polypeptide is Bdellastasin (Hirudo medicinalis (Medicinal leech)).